The sequence spans 436 residues: Methylenetetrahydrofolate--tRNA-(uracil-5-)-methyltransferase TrmFO (436 aa).

An FAD-binding site is contributed by 10–15 (GAGLAG).

It belongs to the MnmG family. TrmFO subfamily. It depends on FAD as a cofactor.

The protein resides in the cytoplasm. The enzyme catalyses uridine(54) in tRNA + (6R)-5,10-methylene-5,6,7,8-tetrahydrofolate + NADH + H(+) = 5-methyluridine(54) in tRNA + (6S)-5,6,7,8-tetrahydrofolate + NAD(+). It carries out the reaction uridine(54) in tRNA + (6R)-5,10-methylene-5,6,7,8-tetrahydrofolate + NADPH + H(+) = 5-methyluridine(54) in tRNA + (6S)-5,6,7,8-tetrahydrofolate + NADP(+). Functionally, catalyzes the folate-dependent formation of 5-methyl-uridine at position 54 (M-5-U54) in all tRNAs. The protein is Methylenetetrahydrofolate--tRNA-(uracil-5-)-methyltransferase TrmFO of Staphylococcus carnosus (strain TM300).